The following is a 173-amino-acid chain: Gamma-crystallin S-1 (173 aa).

2 Beta/gamma crystallin 'Greek key' domains span residues Gly-2 to Ser-40 and Asp-41 to Pro-83. A connecting peptide region spans residues His-84–Ser-88. Beta/gamma crystallin 'Greek key' domains lie at Tyr-89 to Asp-129 and Gly-130 to Met-172.

It belongs to the beta/gamma-crystallin family.

Crystallins are the dominant structural components of the vertebrate eye lens. The chain is Gamma-crystallin S-1 (GS-1) from Chiloscyllium indicum (Slender bamboo shark).